Consider the following 271-residue polypeptide: Formamidopyrimidine-DNA glycosylase (271 aa).

Pro-2 functions as the Schiff-base intermediate with DNA in the catalytic mechanism. Residue Glu-3 is the Proton donor of the active site. The active-site Proton donor; for beta-elimination activity is Lys-57. Residues His-90, Arg-109, and Arg-151 each coordinate DNA. The segment at 236-270 (MVYGRAGEACVTCKTKLQEIRQSNRSSVFCPSCQQ) adopts an FPG-type zinc-finger fold. The Proton donor; for delta-elimination activity role is filled by Arg-260.

This sequence belongs to the FPG family. Monomer. The cofactor is Zn(2+).

The enzyme catalyses Hydrolysis of DNA containing ring-opened 7-methylguanine residues, releasing 2,6-diamino-4-hydroxy-5-(N-methyl)formamidopyrimidine.. It carries out the reaction 2'-deoxyribonucleotide-(2'-deoxyribose 5'-phosphate)-2'-deoxyribonucleotide-DNA = a 3'-end 2'-deoxyribonucleotide-(2,3-dehydro-2,3-deoxyribose 5'-phosphate)-DNA + a 5'-end 5'-phospho-2'-deoxyribonucleoside-DNA + H(+). Involved in base excision repair of DNA damaged by oxidation or by mutagenic agents. Acts as a DNA glycosylase that recognizes and removes damaged bases. Has a preference for oxidized purines, such as 7,8-dihydro-8-oxoguanine (8-oxoG). Has AP (apurinic/apyrimidinic) lyase activity and introduces nicks in the DNA strand. Cleaves the DNA backbone by beta-delta elimination to generate a single-strand break at the site of the removed base with both 3'- and 5'-phosphates. In Colwellia psychrerythraea (strain 34H / ATCC BAA-681) (Vibrio psychroerythus), this protein is Formamidopyrimidine-DNA glycosylase.